The following is a 407-amino-acid chain: Indoleamine 2,3-dioxygenase 1 (407 aa).

Histidine 350 is a binding site for heme b. The interval 362–388 is disordered; sequence SKQKPMGGHKSEEPSNTENRGTGGTDV.

This sequence belongs to the indoleamine 2,3-dioxygenase family. As to quaternary structure, monomer. It depends on heme b as a cofactor.

Its subcellular location is the cytoplasm. It is found in the cytosol. It catalyses the reaction D-tryptophan + O2 = N-formyl-D-kynurenine. It carries out the reaction L-tryptophan + O2 = N-formyl-L-kynurenine. With respect to regulation, activity is inhibited by and MTH-trp (methylthiohydantoin-DL-tryptophan), modestly inhibited by L-1MT (1-methyl-L-tryptophan) but not D-1MT (1-methyl-D-tryptophan). Its function is as follows. Catalyzes the first and rate limiting step of the catabolism of the essential amino acid tryptophan along the kynurenine pathway. Involved in the peripheral immune tolerance, contributing to maintain homeostasis by preventing autoimmunity or immunopathology that would result from uncontrolled and overreacting immune responses. Tryptophan shortage inhibits T lymphocytes division and accumulation of tryptophan catabolites induces T-cell apoptosis and differentiation of regulatory T-cells. Acts as a suppressor of anti-tumor immunity. Limits the growth of intracellular pathogens by depriving tryptophan. Protects the fetus from maternal immune rejection. In Rattus norvegicus (Rat), this protein is Indoleamine 2,3-dioxygenase 1.